The sequence spans 229 residues: Lantibiotic transport ATP-binding protein SrtF (229 aa).

The ABC transporter domain occupies 2–225 (LKIQNLKKSY…EELFNNQILF (224 aa)). 34–41 (GPNGAGKS) is an ATP binding site.

The protein belongs to the ABC transporter superfamily.

Implicated in the export process of the lantibiotic SrtA. This chain is Lantibiotic transport ATP-binding protein SrtF (srtF), found in Streptococcus pyogenes serotype M1.